A 243-amino-acid polypeptide reads, in one-letter code: Zinc import ATP-binding protein ZnuC 2 (243 aa).

The ABC transporter domain maps to 3–218; sequence LSLHQLSVKF…PEYKVLFGLD (216 aa). 35-42 provides a ligand contact to ATP; the sequence is GPNGSGKS.

This sequence belongs to the ABC transporter superfamily. Zinc importer (TC 3.A.1.15.5) family. The complex is composed of two ATP-binding proteins (ZnuC), two transmembrane proteins (ZnuB) and a solute-binding protein (ZnuA).

Its subcellular location is the cell inner membrane. It catalyses the reaction Zn(2+)(out) + ATP(in) + H2O(in) = Zn(2+)(in) + ADP(in) + phosphate(in) + H(+)(in). Part of the ABC transporter complex ZnuABC involved in zinc import. Responsible for energy coupling to the transport system. This chain is Zinc import ATP-binding protein ZnuC 2, found in Aliivibrio fischeri (strain ATCC 700601 / ES114) (Vibrio fischeri).